The following is a 1421-amino-acid chain: Cytoadherence-linked asexual protein 3.2 (1421 aa).

The N-terminal stretch at 1–24 (MVSFFKTPIIIFFFLLCLNEKVLC) is a signal peptide. Cystine bridges form between C335-C363, C409-C415, C519-C547, and C523-C544. The helical transmembrane segment at 1203–1223 (NFFMELANGFMYAFCFFAISQ) threads the bilayer. A disulfide bridge links C1352 with C1355. A disordered region spans residues 1371 to 1413 (GDKNTNETTEIKKQTSTYIDTEKMNEADSADSDDEKDFDTPDN). The span at 1398-1412 (DSADSDDEKDFDTPD) shows a compositional bias: acidic residues.

Component of the RhopH complex. RhopH complex is at least composed of CLAG3.1/CLAG3.2, RhopH2 and RhopH3 with a 1:1:1 subunit stoichiometry. CLAG3.1/CLAG3.2 mediates subunit association through independent contacts with RhopH2 and RhopH3, which do not directly interact with one another. Interacts with RhopH2. Interacts with RhopH3.

The protein resides in the host cell membrane. The protein localises to the parasitophorous vacuole membrane. It is found in the host cytoplasm. Its subcellular location is the cytoplasmic vesicle. It localises to the secretory vesicle. The protein resides in the rhoptry. Participates in the formation of new permeability pathways in Plasmodium-infected erythrocytes enabling the uptake of nutrients from the blood plasma. The sequence is that of Cytoadherence-linked asexual protein 3.2 from Plasmodium falciparum.